A 387-amino-acid chain; its full sequence is Phosphoglycerate kinase (387 aa).

Substrate is bound by residues 21-23 (DLN), Arg-36, 59-62 (HLGR), Arg-113, and Arg-146. ATP-binding positions include Lys-197, Glu-314, and 340–343 (GGDT).

It belongs to the phosphoglycerate kinase family. In terms of assembly, monomer.

Its subcellular location is the cytoplasm. The catalysed reaction is (2R)-3-phosphoglycerate + ATP = (2R)-3-phospho-glyceroyl phosphate + ADP. The protein operates within carbohydrate degradation; glycolysis; pyruvate from D-glyceraldehyde 3-phosphate: step 2/5. The polypeptide is Phosphoglycerate kinase (Pseudomonas entomophila (strain L48)).